Reading from the N-terminus, the 123-residue chain is Large ribosomal subunit protein uL24 (123 aa).

It belongs to the universal ribosomal protein uL24 family. As to quaternary structure, part of the 50S ribosomal subunit.

Its function is as follows. One of two assembly initiator proteins, it binds directly to the 5'-end of the 23S rRNA, where it nucleates assembly of the 50S subunit. Functionally, located at the polypeptide exit tunnel on the outside of the subunit. This is Large ribosomal subunit protein uL24 from Pyrobaculum aerophilum (strain ATCC 51768 / DSM 7523 / JCM 9630 / CIP 104966 / NBRC 100827 / IM2).